The primary structure comprises 419 residues: L-rhamnose isomerase (419 aa).

Residues His-262, Asp-294, and Asp-296 each coordinate Mn(2+).

It belongs to the rhamnose isomerase family. Homotetramer. It depends on Mn(2+) as a cofactor.

The protein localises to the cytoplasm. The catalysed reaction is L-rhamnopyranose = L-rhamnulose. Its pathway is carbohydrate degradation; L-rhamnose degradation; glycerone phosphate from L-rhamnose: step 1/3. In terms of biological role, catalyzes the interconversion of L-rhamnose and L-rhamnulose. In Salmonella newport (strain SL254), this protein is L-rhamnose isomerase.